The chain runs to 327 residues: Tetraacyldisaccharide 4'-kinase (327 aa).

ATP is bound at residue 52 to 59 (TAGGAGKT).

It belongs to the LpxK family.

It catalyses the reaction a lipid A disaccharide + ATP = a lipid IVA + ADP + H(+). Its pathway is glycolipid biosynthesis; lipid IV(A) biosynthesis; lipid IV(A) from (3R)-3-hydroxytetradecanoyl-[acyl-carrier-protein] and UDP-N-acetyl-alpha-D-glucosamine: step 6/6. Transfers the gamma-phosphate of ATP to the 4'-position of a tetraacyldisaccharide 1-phosphate intermediate (termed DS-1-P) to form tetraacyldisaccharide 1,4'-bis-phosphate (lipid IVA). In Gluconacetobacter diazotrophicus (strain ATCC 49037 / DSM 5601 / CCUG 37298 / CIP 103539 / LMG 7603 / PAl5), this protein is Tetraacyldisaccharide 4'-kinase.